The sequence spans 475 residues: tRNA-2-methylthio-N(6)-dimethylallyladenosine synthase (475 aa).

In terms of domain architecture, MTTase N-terminal spans 7–127; the sequence is RKLHIKSYGC…LPKLLAKARD (121 aa). Residues cysteine 16, cysteine 52, cysteine 90, cysteine 168, cysteine 172, and cysteine 175 each coordinate [4Fe-4S] cluster. In terms of domain architecture, Radical SAM core spans 154 to 388; it reads RARGVSAFVT…AQLQALIDAQ (235 aa). The region spanning 394 to 456 is the TRAM domain; that stretch reads RAAIGRTVEV…RYSLKGRLAS (63 aa).

It belongs to the methylthiotransferase family. MiaB subfamily. Monomer. [4Fe-4S] cluster is required as a cofactor.

It localises to the cytoplasm. The enzyme catalyses N(6)-dimethylallyladenosine(37) in tRNA + (sulfur carrier)-SH + AH2 + 2 S-adenosyl-L-methionine = 2-methylsulfanyl-N(6)-dimethylallyladenosine(37) in tRNA + (sulfur carrier)-H + 5'-deoxyadenosine + L-methionine + A + S-adenosyl-L-homocysteine + 2 H(+). In terms of biological role, catalyzes the methylthiolation of N6-(dimethylallyl)adenosine (i(6)A), leading to the formation of 2-methylthio-N6-(dimethylallyl)adenosine (ms(2)i(6)A) at position 37 in tRNAs that read codons beginning with uridine. The polypeptide is tRNA-2-methylthio-N(6)-dimethylallyladenosine synthase (Afipia carboxidovorans (strain ATCC 49405 / DSM 1227 / KCTC 32145 / OM5) (Oligotropha carboxidovorans)).